Consider the following 150-residue polypeptide: Aspartate 1-decarboxylase 1 (150 aa).

Serine 24 acts as the Schiff-base intermediate with substrate; via pyruvic acid in catalysis. The residue at position 24 (serine 24) is a Pyruvic acid (Ser). Position 56 (threonine 56) interacts with substrate. Tyrosine 57 functions as the Proton donor in the catalytic mechanism. Substrate is bound at residue 72–74; sequence GAA.

This sequence belongs to the PanD family. In terms of assembly, heterooctamer of four alpha and four beta subunits. Requires pyruvate as cofactor. Is synthesized initially as an inactive proenzyme, which is activated by self-cleavage at a specific serine bond to produce a beta-subunit with a hydroxyl group at its C-terminus and an alpha-subunit with a pyruvoyl group at its N-terminus.

It localises to the cytoplasm. It carries out the reaction L-aspartate + H(+) = beta-alanine + CO2. The protein operates within cofactor biosynthesis; (R)-pantothenate biosynthesis; beta-alanine from L-aspartate: step 1/1. Catalyzes the pyruvoyl-dependent decarboxylation of aspartate to produce beta-alanine. The protein is Aspartate 1-decarboxylase 1 of Mesorhizobium japonicum (strain LMG 29417 / CECT 9101 / MAFF 303099) (Mesorhizobium loti (strain MAFF 303099)).